The following is a 172-amino-acid chain: Endoribonuclease YbeY (172 aa).

3 residues coordinate Zn(2+): His124, His128, and His134.

Belongs to the endoribonuclease YbeY family. Zn(2+) serves as cofactor.

The protein localises to the cytoplasm. Its function is as follows. Single strand-specific metallo-endoribonuclease involved in late-stage 70S ribosome quality control and in maturation of the 3' terminus of the 16S rRNA. This chain is Endoribonuclease YbeY, found in Rhodopseudomonas palustris (strain BisA53).